We begin with the raw amino-acid sequence, 664 residues long: Glycine--tRNA ligase beta subunit (664 aa).

This sequence belongs to the class-II aminoacyl-tRNA synthetase family. Tetramer of two alpha and two beta subunits.

The protein resides in the cytoplasm. It catalyses the reaction tRNA(Gly) + glycine + ATP = glycyl-tRNA(Gly) + AMP + diphosphate. This chain is Glycine--tRNA ligase beta subunit, found in Rickettsia typhi (strain ATCC VR-144 / Wilmington).